A 120-amino-acid chain; its full sequence is Large ribosomal subunit protein uL18 (120 aa).

Belongs to the universal ribosomal protein uL18 family. As to quaternary structure, part of the 50S ribosomal subunit; part of the 5S rRNA/L5/L18/L25 subcomplex. Contacts the 5S and 23S rRNAs.

Functionally, this is one of the proteins that bind and probably mediate the attachment of the 5S RNA into the large ribosomal subunit, where it forms part of the central protuberance. In Brucella abortus (strain S19), this protein is Large ribosomal subunit protein uL18.